A 112-amino-acid chain; its full sequence is FK506-binding protein 1A (112 aa).

Positions 20-108 (GDFVTIHYTG…IFEVELLGIN (89 aa)) constitute a PPIase FKBP-type domain.

The protein belongs to the FKBP-type PPIase family. FKBP1 subfamily.

Its subcellular location is the cytoplasm. The enzyme catalyses [protein]-peptidylproline (omega=180) = [protein]-peptidylproline (omega=0). With respect to regulation, inhibited by both FK506 and rapamycin. Its function is as follows. PPIases accelerate the folding of proteins. It catalyzes the cis-trans isomerization of proline imidic peptide bonds in oligopeptides. The protein is FK506-binding protein 1A (fpr1A) of Aspergillus fumigatus (strain ATCC MYA-4609 / CBS 101355 / FGSC A1100 / Af293) (Neosartorya fumigata).